Consider the following 219-residue polypeptide: MTEFIPLFAVRRNYGDVSGTRSVYLTFDDGPNPFCTPDVLDVLTQHRVPATFFVIGTYVANQPELIRRMVAEGHEVANHTMTHPDLSRCEPAEVHDEVLTASRAIRSACPQALPRHMRAPYGIWTQDVLATSAKAGLAAVHWSVDPRDWARPGVDRIVSSVLAAIRPGAIVLLHDGYPPGEERSCTDATSRDQTVRALSYLIPALQRRGFEIHPLPQLH.

In terms of domain architecture, NodB homology spans R21–H213. Catalysis depends on D28, which acts as the Proton acceptor. 2 residues coordinate a divalent metal cation: H79 and H83. H174 functions as the Proton donor in the catalytic mechanism.

The protein belongs to the polysaccharide deacetylase family.

Its subcellular location is the cytoplasm. Functionally, is involved in generating a small heat-stable compound (Nod), an acylated oligomer of N-acetylglucosamine, that stimulates mitosis in various plant protoplasts. The sequence is that of Chitooligosaccharide deacetylase (nodB) from Bradyrhizobium sp. (strain ANU 289).